A 129-amino-acid polypeptide reads, in one-letter code: Large ribosomal subunit protein bL20 (129 aa).

It belongs to the bacterial ribosomal protein bL20 family.

Binds directly to 23S ribosomal RNA and is necessary for the in vitro assembly process of the 50S ribosomal subunit. It is not involved in the protein synthesizing functions of that subunit. The polypeptide is Large ribosomal subunit protein bL20 (Mycobacterium leprae (strain Br4923)).